The chain runs to 454 residues: Laccase-3 (454 aa).

Plastocyanin-like domains lie at 1-95 and 101-252; these read PGPT…GPAT and DLGV…YSGA. The N-linked (GlcNAc...) asparagine glycan is linked to Asn-24. Cu cation contacts are provided by His-29, His-31, His-73, and His-75. 5 N-linked (GlcNAc...) asparagine glycosylation sites follow: Asn-138, Asn-169, Asn-218, Asn-314, and Asn-334. In terms of domain architecture, Plastocyanin-like 3 spans 319-454; the sequence is DVDWKKPILQ…SEGLAVQFQG (136 aa). Residues His-375, His-378, and His-380 each coordinate Cu cation. The N-linked (GlcNAc...) asparagine glycan is linked to Asn-395. 4 residues coordinate Cu cation: His-437, Cys-438, His-439, and His-443.

Belongs to the multicopper oxidase family. Cu cation is required as a cofactor.

It is found in the secreted. The enzyme catalyses 4 hydroquinone + O2 = 4 benzosemiquinone + 2 H2O. Functionally, lignin degradation and detoxification of lignin-derived products. The chain is Laccase-3 (lcc3) from Botryotinia fuckeliana (Noble rot fungus).